We begin with the raw amino-acid sequence, 129 residues long: UPF0102 protein amb4503 (129 aa).

It belongs to the UPF0102 family.

This Paramagnetospirillum magneticum (strain ATCC 700264 / AMB-1) (Magnetospirillum magneticum) protein is UPF0102 protein amb4503.